A 314-amino-acid chain; its full sequence is Nucleoprotein (314 aa).

An N-acetylmethionine; by host modification is found at M1. Y38, Y41, R118, K237, and S266 together coordinate RNA.

It belongs to the tenuiviruses nucleocapsid protein family.

The protein resides in the virion. It localises to the host cytoplasm. Its function is as follows. Encapsidates the genome, protecting it from nucleases. The encapsidated genomic RNA is termed the nucleocapsid (NC), and serves as template for viral transcription and replication. This chain is Nucleoprotein, found in Wheat yellow head virus (WYHV).